A 450-amino-acid chain; its full sequence is Tubulin alpha chain (450 aa).

The MREC motif motif lies at 1 to 4; that stretch reads MREC. Residue Gln-11 participates in GTP binding. An N6-acetyllysine modification is found at Lys-40. The GTP site is built by Glu-71, Ser-140, Gly-144, Thr-145, Thr-179, Asn-206, and Asn-228. Glu-71 lines the Mg(2+) pocket. Glu-254 is a catalytic residue. Glu-444 carries the post-translational modification 5-glutamyl polyglutamate.

The protein belongs to the tubulin family. As to quaternary structure, dimer of alpha and beta chains. A typical microtubule is a hollow water-filled tube with an outer diameter of 25 nm and an inner diameter of 15 nM. Alpha-beta heterodimers associate head-to-tail to form protofilaments running lengthwise along the microtubule wall with the beta-tubulin subunit facing the microtubule plus end conferring a structural polarity. Microtubules usually have 13 protofilaments but different protofilament numbers can be found in some organisms and specialized cells. Mg(2+) is required as a cofactor. Some glutamate residues at the C-terminus are polyglycylated, resulting in polyglycine chains on the gamma-carboxyl group. Glycylation is mainly limited to tubulin incorporated into axonemes (cilia and flagella) whereas glutamylation is prevalent in neuronal cells, centrioles, axonemes, and the mitotic spindle. Both modifications can coexist on the same protein on adjacent residues, and lowering polyglycylation levels increases polyglutamylation, and reciprocally. The precise function of polyglycylation is still unclear. Post-translationally, some glutamate residues at the C-terminus are polyglutamylated, resulting in polyglutamate chains on the gamma-carboxyl group. Polyglutamylation plays a key role in microtubule severing by spastin (SPAST). SPAST preferentially recognizes and acts on microtubules decorated with short polyglutamate tails: severing activity by SPAST increases as the number of glutamates per tubulin rises from one to eight, but decreases beyond this glutamylation threshold. In terms of processing, acetylation of alpha chains at Lys-40 is located inside the microtubule lumen. This modification has been correlated with increased microtubule stability, intracellular transport and ciliary assembly. Undergoes a tyrosination/detyrosination cycle, the cyclic removal and re-addition of a C-terminal tyrosine residue by the enzymes tubulin tyrosine carboxypeptidase (MATCAP, VASH1 or VASH2) and tubulin tyrosine ligase (TTL), respectively. Post-translationally, tyrosination promotes microtubule interaction with CAP-Gly microtubule plus-end tracking proteins. Tyrosinated tubulins regulate the initiation of dynein-driven motility. In terms of processing, detyrosination is involved in metaphase plate congression by guiding chromosomes during mitosis. Detyrosination increases microtubules-dependent mechanotransduction in dystrophic cardiac and skeletal muscle. In cardiomyocytes, detyrosinated microtubules are required to resist to contractile compression during contraction.

It localises to the cytoplasm. Its subcellular location is the cytoskeleton. The enzyme catalyses GTP + H2O = GDP + phosphate + H(+). Tubulin is the major constituent of microtubules, a cylinder consisting of laterally associated linear protofilaments composed of alpha- and beta-tubulin heterodimers. Microtubules grow by the addition of GTP-tubulin dimers to the microtubule end, where a stabilizing cap forms. Below the cap, tubulin dimers are in GDP-bound state, owing to GTPase activity of alpha-tubulin. In Notophthalmus viridescens (Eastern newt), this protein is Tubulin alpha chain.